Consider the following 122-residue polypeptide: Large ribosomal subunit protein uL14 (122 aa).

The protein belongs to the universal ribosomal protein uL14 family. As to quaternary structure, part of the 50S ribosomal subunit. Forms a cluster with proteins L3 and L19. In the 70S ribosome, L14 and L19 interact and together make contacts with the 16S rRNA in bridges B5 and B8.

In terms of biological role, binds to 23S rRNA. Forms part of two intersubunit bridges in the 70S ribosome. In Syntrophotalea carbinolica (strain DSM 2380 / NBRC 103641 / GraBd1) (Pelobacter carbinolicus), this protein is Large ribosomal subunit protein uL14.